A 185-amino-acid polypeptide reads, in one-letter code: Peptidyl-tRNA hydrolase (185 aa).

Y14 serves as a coordination point for tRNA. H19 acts as the Proton acceptor in catalysis. TRNA-binding residues include F64, N66, and N112.

This sequence belongs to the PTH family. As to quaternary structure, monomer.

It is found in the cytoplasm. It carries out the reaction an N-acyl-L-alpha-aminoacyl-tRNA + H2O = an N-acyl-L-amino acid + a tRNA + H(+). In terms of biological role, hydrolyzes ribosome-free peptidyl-tRNAs (with 1 or more amino acids incorporated), which drop off the ribosome during protein synthesis, or as a result of ribosome stalling. Catalyzes the release of premature peptidyl moieties from peptidyl-tRNA molecules trapped in stalled 50S ribosomal subunits, and thus maintains levels of free tRNAs and 50S ribosomes. The polypeptide is Peptidyl-tRNA hydrolase (Levilactobacillus brevis (strain ATCC 367 / BCRC 12310 / CIP 105137 / JCM 1170 / LMG 11437 / NCIMB 947 / NCTC 947) (Lactobacillus brevis)).